A 556-amino-acid chain; its full sequence is Formate--tetrahydrofolate ligase (556 aa).

65 to 72 contributes to the ATP binding site; it reads TPAGEGKS.

Belongs to the formate--tetrahydrofolate ligase family.

The catalysed reaction is (6S)-5,6,7,8-tetrahydrofolate + formate + ATP = (6R)-10-formyltetrahydrofolate + ADP + phosphate. It functions in the pathway one-carbon metabolism; tetrahydrofolate interconversion. The polypeptide is Formate--tetrahydrofolate ligase (Streptococcus pneumoniae (strain ATCC 700669 / Spain 23F-1)).